The following is a 452-amino-acid chain: FAD-linked oxidoreductase DDB_G0289697 (452 aa).

The FAD-binding PCMH-type domain maps to 44–212 (VVNTPLLIVY…TDFTFKLHPV (169 aa)). His-81 is modified (pros-8alpha-FAD histidine).

This sequence belongs to the oxygen-dependent FAD-linked oxidoreductase family. FAD serves as cofactor.

The sequence is that of FAD-linked oxidoreductase DDB_G0289697 from Dictyostelium discoideum (Social amoeba).